A 468-amino-acid polypeptide reads, in one-letter code: Hydroxymethylglutaryl-CoA synthase B (468 aa).

Residue glutamate 85 is the Proton donor/acceptor of the active site. The active-site Acyl-thioester intermediate is the cysteine 119. Residues cysteine 119, threonine 161, serine 211, histidine 250, lysine 259, asparagine 327, and serine 359 each contribute to the (3S)-3-hydroxy-3-methylglutaryl-CoA site. Histidine 250 (proton donor/acceptor) is an active-site residue.

This sequence belongs to the thiolase-like superfamily. HMG-CoA synthase family.

The enzyme catalyses acetoacetyl-CoA + acetyl-CoA + H2O = (3S)-3-hydroxy-3-methylglutaryl-CoA + CoA + H(+). It functions in the pathway metabolic intermediate biosynthesis; (R)-mevalonate biosynthesis; (R)-mevalonate from acetyl-CoA: step 2/3. In terms of biological role, condenses acetyl-CoA with acetoacetyl-CoA to form HMG-CoA, which is the substrate for HMG-CoA reductase. The polypeptide is Hydroxymethylglutaryl-CoA synthase B (hgsB) (Dictyostelium discoideum (Social amoeba)).